We begin with the raw amino-acid sequence, 301 residues long: Cell division control protein 2 homolog 1 (301 aa).

The region spanning 5-297 (YQRLEKIGEG…AAQALEHPYF (293 aa)) is the Protein kinase domain. Residues 11–19 (IGEGSYGVV) and Lys34 contribute to the ATP site. Residue Ser15 is modified to Phosphoserine. Tyr16 is modified (phosphotyrosine). Asp127 acts as the Proton acceptor in catalysis. Residue Thr160 is modified to Phosphothreonine; by CAK.

The protein belongs to the protein kinase superfamily. CMGC Ser/Thr protein kinase family. CDC2/CDKX subfamily. Forms a stable but non-covalent complex with a regulatory subunit and with a cyclin.

The enzyme catalyses L-seryl-[protein] + ATP = O-phospho-L-seryl-[protein] + ADP + H(+). The catalysed reaction is L-threonyl-[protein] + ATP = O-phospho-L-threonyl-[protein] + ADP + H(+). Its activity is regulated as follows. Phosphorylation at Ser-15 or Tyr-16 inactivates the enzyme, while phosphorylation at Thr-160 activates it. Functionally, probably involved in the control of the cell cycle. The chain is Cell division control protein 2 homolog 1 (CRK1) from Trypanosoma congolense.